A 379-amino-acid polypeptide reads, in one-letter code: Chaperone protein DnaJ (379 aa).

The J domain maps to 5–70 (DYYEVLGVGK…EKKAAYDQYG (66 aa)). The CR-type zinc finger occupies 139-217 (GHEAQIRVPH…CHGQGKLKSQ (79 aa)). Residues C152, C155, C169, C172, C191, C194, C205, and C208 each contribute to the Zn(2+) site. CXXCXGXG motif repeat units follow at residues 152-159 (CEHCHGNG), 169-176 (CPTCNGVG), 191-198 (CPKCHGSG), and 205-212 (CTKCHGQG).

It belongs to the DnaJ family. Homodimer. Zn(2+) is required as a cofactor.

It is found in the cytoplasm. Functionally, participates actively in the response to hyperosmotic and heat shock by preventing the aggregation of stress-denatured proteins and by disaggregating proteins, also in an autonomous, DnaK-independent fashion. Unfolded proteins bind initially to DnaJ; upon interaction with the DnaJ-bound protein, DnaK hydrolyzes its bound ATP, resulting in the formation of a stable complex. GrpE releases ADP from DnaK; ATP binding to DnaK triggers the release of the substrate protein, thus completing the reaction cycle. Several rounds of ATP-dependent interactions between DnaJ, DnaK and GrpE are required for fully efficient folding. Also involved, together with DnaK and GrpE, in the DNA replication of plasmids through activation of initiation proteins. The protein is Chaperone protein DnaJ of Cupriavidus metallidurans (strain ATCC 43123 / DSM 2839 / NBRC 102507 / CH34) (Ralstonia metallidurans).